The following is a 534-amino-acid chain: UDP-glucuronosyltransferase 2A3 (534 aa).

The signal sequence occupies residues 1-18 (MVSEKCVAAFFLLQLCWA). The Extracellular portion of the chain corresponds to 19–493 (GCGFCSKVLV…SWFQYHSLDV (475 aa)). Asn102 carries an N-linked (GlcNAc...) asparagine glycan. Lys135 bears the N6-succinyllysine mark. N-linked (GlcNAc...) asparagine glycosylation occurs at Asn204. Residues 494-514 (IGFLLLCVVTLTFIITKFCLF) form a helical membrane-spanning segment. The Cytoplasmic segment spans residues 515–534 (VCQKLYMKESKKMGNRKKKN).

Belongs to the UDP-glycosyltransferase family. In terms of tissue distribution, highly expressed in liver, with lower levels in duodenum and jejunum.

The protein localises to the membrane. It carries out the reaction glucuronate acceptor + UDP-alpha-D-glucuronate = acceptor beta-D-glucuronoside + UDP + H(+). In terms of biological role, UDP-glucuronosyltransferases catalyze phase II biotransformation reactions in which lipophilic substrates are conjugated with glucuronic acid to increase water solubility and enhance excretion. They are of major importance in the conjugation and subsequent elimination of potentially toxic xenobiotics and endogenous compounds. This is UDP-glucuronosyltransferase 2A3 (Ugt2a3) from Mus musculus (Mouse).